Here is a 181-residue protein sequence, read N- to C-terminus: High mobility group protein B4 (181 aa).

A DNA-binding region (HMG box 1) is located at residues 9-79 (PKVNVSSYIH…RYQQEMMNYI (71 aa)). A compositionally biased stretch (basic residues) spans 80–89 (GKRRKRRKRD). Positions 80-100 (GKRRKRRKRDPKAPRKPPSSF) are disordered. Positions 93-161 (PRKPPSSFLL…KYFEEQEAYR (69 aa)) form a DNA-binding region, HMG box 2.

This sequence belongs to the HMGB family. As to expression, expressed in adult germ cells (at protein level).

Its subcellular location is the nucleus. It localises to the chromosome. This is High mobility group protein B4 (Hmgb4) from Mus musculus (Mouse).